The following is a 119-amino-acid chain: uncharacterized protein (119 aa).

The next 2 helical transmembrane spans lie at 57–77 (FSHH…SILF) and 80–100 (YIFV…FILH).

Its subcellular location is the membrane. This is an uncharacterized protein from Saccharomyces cerevisiae (strain ATCC 204508 / S288c) (Baker's yeast).